Reading from the N-terminus, the 179-residue chain is Apoptosis regulator Bcl-2 homolog (179 aa).

The short motif at 76–95 is the BH1 element; it reads ELFKDLINWGRICGFIVFSA. The short motif at 126–141 is the BH2 element; sequence PWMISHGGQEEFLAFS.

This sequence belongs to the Bcl-2 family. As to quaternary structure, interacts with host BECN1 (via BH3 homology domain); this interaction allows the virus to inhibit BECN1, and thus autophagy. Interacts with host BID. Interacts with host BAX.

Its subcellular location is the host mitochondrion. The protein localises to the host endoplasmic reticulum. Suppresses apoptosis in host cell to promote the viral replication. Has the ability to potentially bind to all the members of the proapoptotic Bcl-2 family. Inhibits autophagy by interacting with host Beclin 1 (BECN1). The polypeptide is Apoptosis regulator Bcl-2 homolog (Ornithodoros (relapsing fever ticks)).